A 33-amino-acid polypeptide reads, in one-letter code: Dermaseptin-H8 (33 aa).

Position 33 is a leucine amide (Leu-33).

Expressed by the skin glands.

It localises to the secreted. Its function is as follows. Has antimicrobial activity. This Pithecopus hypochondrialis (Orange-legged leaf frog) protein is Dermaseptin-H8.